The sequence spans 135 residues: Ribonuclease P protein component (135 aa).

Residues 115 to 135 (TNETVSPVSDTPLPQHERGSQ) are disordered.

The protein belongs to the RnpA family. In terms of assembly, consists of a catalytic RNA component (M1 or rnpB) and a protein subunit.

It carries out the reaction Endonucleolytic cleavage of RNA, removing 5'-extranucleotides from tRNA precursor.. Its function is as follows. RNaseP catalyzes the removal of the 5'-leader sequence from pre-tRNA to produce the mature 5'-terminus. It can also cleave other RNA substrates such as 4.5S RNA. The protein component plays an auxiliary but essential role in vivo by binding to the 5'-leader sequence and broadening the substrate specificity of the ribozyme. The polypeptide is Ribonuclease P protein component (Chloroflexus aurantiacus (strain ATCC 29366 / DSM 635 / J-10-fl)).